The sequence spans 235 residues: Venom metalloproteinase antarease-like TserMP_B (235 aa).

The Peptidase M12B domain occupies 4-233 (IVVEYYIVTD…PTASCIFQQC (230 aa)). A disulfide bridge connects residues Cys137 and Cys228. His161 contacts Zn(2+). Residue Glu162 is part of the active site. Zn(2+) contacts are provided by His165 and His171.

Belongs to the venom metalloproteinase (M12B) family. It depends on Zn(2+) as a cofactor. Expressed by the venom gland.

It is found in the secreted. Its activity is regulated as follows. Inhibited by EDTA. Functionally, acts as a metalloprotease. Penetrates intact tissue and specifically cleaves the vesicle-associated membrane protein 2 (VAMP2) (part of the SNARE complex) involved in pancreatic secretion, thus disrupting the normal vesicular traffic. This Tityus serrulatus (Brazilian scorpion) protein is Venom metalloproteinase antarease-like TserMP_B.